Consider the following 458-residue polypeptide: Bifunctional protein GlmU (458 aa).

Residues methionine 1–arginine 229 form a pyrophosphorylase region. UDP-N-acetyl-alpha-D-glucosamine-binding positions include leucine 11–glycine 14, lysine 25, glutamine 76, glycine 81–threonine 82, tyrosine 103–aspartate 105, glycine 140, glutamate 154, asparagine 169, and asparagine 227. Position 105 (aspartate 105) interacts with Mg(2+). Asparagine 227 lines the Mg(2+) pocket. The tract at residues glutamine 230 to alanine 250 is linker. The segment at glycine 251–lysine 458 is N-acetyltransferase. Arginine 333 and lysine 351 together coordinate UDP-N-acetyl-alpha-D-glucosamine. The active-site Proton acceptor is the histidine 363. Positions 366 and 377 each coordinate UDP-N-acetyl-alpha-D-glucosamine. Residues alanine 380, asparagine 386–tyrosine 387, serine 405, alanine 423, and arginine 440 each bind acetyl-CoA.

The protein in the N-terminal section; belongs to the N-acetylglucosamine-1-phosphate uridyltransferase family. In the C-terminal section; belongs to the transferase hexapeptide repeat family. In terms of assembly, homotrimer. Requires Mg(2+) as cofactor.

Its subcellular location is the cytoplasm. It carries out the reaction alpha-D-glucosamine 1-phosphate + acetyl-CoA = N-acetyl-alpha-D-glucosamine 1-phosphate + CoA + H(+). It catalyses the reaction N-acetyl-alpha-D-glucosamine 1-phosphate + UTP + H(+) = UDP-N-acetyl-alpha-D-glucosamine + diphosphate. The protein operates within nucleotide-sugar biosynthesis; UDP-N-acetyl-alpha-D-glucosamine biosynthesis; N-acetyl-alpha-D-glucosamine 1-phosphate from alpha-D-glucosamine 6-phosphate (route II): step 2/2. It functions in the pathway nucleotide-sugar biosynthesis; UDP-N-acetyl-alpha-D-glucosamine biosynthesis; UDP-N-acetyl-alpha-D-glucosamine from N-acetyl-alpha-D-glucosamine 1-phosphate: step 1/1. It participates in bacterial outer membrane biogenesis; LPS lipid A biosynthesis. In terms of biological role, catalyzes the last two sequential reactions in the de novo biosynthetic pathway for UDP-N-acetylglucosamine (UDP-GlcNAc). The C-terminal domain catalyzes the transfer of acetyl group from acetyl coenzyme A to glucosamine-1-phosphate (GlcN-1-P) to produce N-acetylglucosamine-1-phosphate (GlcNAc-1-P), which is converted into UDP-GlcNAc by the transfer of uridine 5-monophosphate (from uridine 5-triphosphate), a reaction catalyzed by the N-terminal domain. This chain is Bifunctional protein GlmU, found in Pasteurella multocida (strain Pm70).